We begin with the raw amino-acid sequence, 361 residues long: Phosphoserine aminotransferase (361 aa).

R42 contacts L-glutamate. Residues 76–77 (AR), W102, T153, D173, and Q196 each bind pyridoxal 5'-phosphate. Position 197 is an N6-(pyridoxal phosphate)lysine (K197). 238 to 239 (NT) lines the pyridoxal 5'-phosphate pocket.

The protein belongs to the class-V pyridoxal-phosphate-dependent aminotransferase family. SerC subfamily. As to quaternary structure, homodimer. Pyridoxal 5'-phosphate serves as cofactor.

The protein localises to the cytoplasm. The catalysed reaction is O-phospho-L-serine + 2-oxoglutarate = 3-phosphooxypyruvate + L-glutamate. It catalyses the reaction 4-(phosphooxy)-L-threonine + 2-oxoglutarate = (R)-3-hydroxy-2-oxo-4-phosphooxybutanoate + L-glutamate. Its pathway is amino-acid biosynthesis; L-serine biosynthesis; L-serine from 3-phospho-D-glycerate: step 2/3. The protein operates within cofactor biosynthesis; pyridoxine 5'-phosphate biosynthesis; pyridoxine 5'-phosphate from D-erythrose 4-phosphate: step 3/5. Catalyzes the reversible conversion of 3-phosphohydroxypyruvate to phosphoserine and of 3-hydroxy-2-oxo-4-phosphonooxybutanoate to phosphohydroxythreonine. This Buchnera aphidicola subsp. Acyrthosiphon pisum (strain 5A) protein is Phosphoserine aminotransferase.